Here is a 228-residue protein sequence, read N- to C-terminus: MTARRAPAVNRDVLEQMLIDGTAALDIVLTDAQRNQLLDYVALLGKWNAVYNLTAIRDPRQMLIQHILDSLSIVPHLRGRTDARVLDVGSGGGLPGIVLAIVQPGWQVTLNDIVQKKSAFQTQMRAELKLTNLSVVTGRVESLQPGGEVPEKFDMIVSRAFADLSDFVKLARHLVAPGGSIWAMKGVHPDDEIARLPEGSRVKQTIRLAVPMLDAERHLIEVAVDEAN.

Residues glycine 89, leucine 94, 140 to 141 (VE), and arginine 159 each bind S-adenosyl-L-methionine.

The protein belongs to the methyltransferase superfamily. RNA methyltransferase RsmG family.

Its subcellular location is the cytoplasm. It carries out the reaction guanosine(527) in 16S rRNA + S-adenosyl-L-methionine = N(7)-methylguanosine(527) in 16S rRNA + S-adenosyl-L-homocysteine. Its function is as follows. Specifically methylates the N7 position of guanine in position 527 of 16S rRNA. This is Ribosomal RNA small subunit methyltransferase G from Burkholderia vietnamiensis (strain G4 / LMG 22486) (Burkholderia cepacia (strain R1808)).